The primary structure comprises 330 residues: RNA polymerase sigma factor RpoS (330 aa).

Residues 56-89 (DATQLYLGEIGYSPLLTAEEEVYFARRALRGDVA) form a sigma-70 factor domain-1 region. The segment at 94 to 164 (MIESNLRLVV…ERAIMNQTRT (71 aa)) is sigma-70 factor domain-2. The Interaction with polymerase core subunit RpoC signature appears at 118 to 121 (DLIE). A sigma-70 factor domain-3 region spans residues 174 to 249 (ELNVYLRTAR…DEKENGPEDT (76 aa)). The tract at residues 262–315 (WLFELNAKQREVLARRFGLLGYEAATLEDVGREIGLTRERVRQIQVEGLRRLRE) is sigma-70 factor domain-4. The segment at residues 288–307 (LEDVGREIGLTRERVRQIQV) is a DNA-binding region (H-T-H motif).

This sequence belongs to the sigma-70 factor family. RpoS subfamily. In terms of assembly, interacts with the RNA polymerase core enzyme.

Its subcellular location is the cytoplasm. Sigma factors are initiation factors that promote the attachment of RNA polymerase to specific initiation sites and are then released. This sigma factor is the master transcriptional regulator of the stationary phase and the general stress response. This is RNA polymerase sigma factor RpoS from Shigella flexneri.